The chain runs to 199 residues: Protein ASYMMETRIC LEAVES 2 (199 aa).

An LOB domain is found at 8 to 109 (SPCAACKFLR…IDLSCAKSEL (102 aa)).

Belongs to the LOB domain-containing protein family. In terms of assembly, homo- and heterodimer with AS1. Interacts with AS1. Part of the AS1 repressor complex composed of AS1, LBD6/AS2 and HDA6. Interacts with LFR. As to expression, expressed in young shoots, roots, stems, leaves, flowers and adaxial domains of cotyledonary and leaves primordia.

The protein localises to the nucleus. In terms of biological role, negative regulator of cell proliferation in the adaxial side of leaves. Regulates the formation of a symmetric lamina and the establishment of venation. Positively regulates LATERAL ORGAN BOUNDARIES (LOB) within the shoot apex, and the class III HD-ZIP genes REV, PHB, and PHV. Interacts directly with ASYMMETRIC LEAVES 1 (AS1) to repress the knox homeobox genes KNAT1, KNAT2, and KNAT6 and the abaxial determinants ARF3, KAN2 and YAB5. May act in parallel with the RDR6-SGS3-AGO7 pathway, an endogenous RNA silencing pathway, to regulate the leaf morphogenesis. Required for the binding of AS1 to the KNOX genes. Involved in leaf polarity establishment by functioning cooperatively with RH10 or RID2 to repress abaxial genes ARF3, ARF4, KAN1, KAN2, YAB1 and YAB5, and the knox homeobox genes KNAT1, KNAT2, KNAT6, and STM to promote adaxial development in leaf primordia at shoot apical meristems at high temperatures. The polypeptide is Protein ASYMMETRIC LEAVES 2 (Arabidopsis thaliana (Mouse-ear cress)).